A 272-amino-acid polypeptide reads, in one-letter code: Exosome complex component Rrp42 (272 aa).

The protein belongs to the RNase PH family. Rrp42 subfamily. As to quaternary structure, component of the archaeal exosome complex. Forms a hexameric ring-like arrangement composed of 3 Rrp41-Rrp42 heterodimers. The hexameric ring associates with a trimer of Rrp4 and/or Csl4 subunits.

The protein localises to the cytoplasm. In terms of biological role, non-catalytic component of the exosome, which is a complex involved in RNA degradation. Contributes to the structuring of the Rrp41 active site. In Thermococcus kodakarensis (strain ATCC BAA-918 / JCM 12380 / KOD1) (Pyrococcus kodakaraensis (strain KOD1)), this protein is Exosome complex component Rrp42.